The sequence spans 451 residues: COBRA-like protein 6 (451 aa).

Residues 1-21 form the signal peptide; the sequence is MAVLGSLLLLILAATLSVAVA. 8 N-linked (GlcNAc...) asparagine glycosylation sites follow: asparagine 30, asparagine 155, asparagine 163, asparagine 202, asparagine 227, asparagine 323, asparagine 338, and asparagine 357. A lipid anchor (GPI-anchor amidated asparagine) is attached at asparagine 426. The propeptide at 427 to 451 is removed in mature form; that stretch reads AAPPAAASLVGSAVAMAALVFFLMA.

The protein belongs to the COBRA family.

It is found in the cell membrane. Its function is as follows. Involved in determining the orientation of cell expansion, probably by playing an important role in cellulose deposition. May act by recruiting cellulose synthesizing complexes to discrete positions on the cell surface. This Oryza sativa subsp. japonica (Rice) protein is COBRA-like protein 6 (BC1L7).